The following is a 630-amino-acid chain: DNA mismatch repair protein MutL (630 aa).

Positions 398 to 408 are enriched in polar residues; the sequence is TQTNAFGSMAT. The interval 398–425 is disordered; it reads TQTNAFGSMATSRDSSRGSYSASESRQR.

The protein belongs to the DNA mismatch repair MutL/HexB family.

Its function is as follows. This protein is involved in the repair of mismatches in DNA. It is required for dam-dependent methyl-directed DNA mismatch repair. May act as a 'molecular matchmaker', a protein that promotes the formation of a stable complex between two or more DNA-binding proteins in an ATP-dependent manner without itself being part of a final effector complex. The chain is DNA mismatch repair protein MutL from Shewanella baltica (strain OS185).